Here is a 498-residue protein sequence, read N- to C-terminus: Inosine-5'-monophosphate dehydrogenase (498 aa).

2 CBS domains span residues 98–155 (MVVN…EQKI) and 159–216 (MTRE…PHAS). NAD(+) contacts are provided by residues D253 and 303–305 (GIG). 2 residues coordinate K(+): G305 and G307. S308 is an IMP binding site. C310 contacts K(+). Catalysis depends on C310, which acts as the Thioimidate intermediate. Residues 343–345 (DGG), 366–367 (GS), and 390–394 (YRGMG) contribute to the IMP site. Residue R406 is the Proton acceptor of the active site. Residue E421 participates in IMP binding. K(+)-binding residues include E475, S476, and H477.

Belongs to the IMPDH/GMPR family. As to quaternary structure, homotetramer. Requires K(+) as cofactor.

It carries out the reaction IMP + NAD(+) + H2O = XMP + NADH + H(+). It participates in purine metabolism; XMP biosynthesis via de novo pathway; XMP from IMP: step 1/1. Its activity is regulated as follows. Mycophenolic acid (MPA) is a non-competitive inhibitor that prevents formation of the closed enzyme conformation by binding to the same site as the amobile flap. In contrast, mizoribine monophosphate (MZP) is a competitive inhibitor that induces the closed conformation. MPA is a potent inhibitor of mammalian IMPDHs but a poor inhibitor of the bacterial enzymes. MZP is a more potent inhibitor of bacterial IMPDH. In terms of biological role, catalyzes the conversion of inosine 5'-phosphate (IMP) to xanthosine 5'-phosphate (XMP), the first committed and rate-limiting step in the de novo synthesis of guanine nucleotides, and therefore plays an important role in the regulation of cell growth. This chain is Inosine-5'-monophosphate dehydrogenase, found in Rhizobium tropici.